A 93-amino-acid polypeptide reads, in one-letter code: Guanine nucleotide-binding protein subunit gamma (93 aa).

The interval methionine 1 to methionine 22 is disordered. Cysteine 89 carries S-palmitoyl cysteine lipidation. At cysteine 90 the chain carries Cysteine methyl ester. A lipid anchor (S-farnesyl cysteine) is attached at cysteine 90. Residues valine 91–methionine 93 constitute a propeptide, removed in mature form.

It belongs to the G protein gamma family. As to quaternary structure, g proteins are composed of 3 units, alpha, beta and gamma.

The protein resides in the membrane. The sequence is that of Guanine nucleotide-binding protein subunit gamma (gng-1) from Neurospora crassa (strain ATCC 24698 / 74-OR23-1A / CBS 708.71 / DSM 1257 / FGSC 987).